Consider the following 23-residue polypeptide: Apolipophorin-1 (23 aa).

Residues serine 1–alanine 15 show a composition bias toward basic and acidic residues. The tract at residues serine 1–glutamate 23 is disordered.

As to expression, expressed in hemolymph.

The protein localises to the secreted. Its function is as follows. Constitutes the major component of lipophorin, which mediates transport for various types of lipids in hemolymph. Acts by forming lipoprotein particles that bind lipoproteins and lipids. This is Apolipophorin-1 from Galleria mellonella (Greater wax moth).